The chain runs to 1294 residues: Unconventional myosin-VI (1294 aa).

Residues 2 to 53 form the Myosin N-terminal SH3-like domain; the sequence is EDGKPVWAPHPTDGFQMGNIVDIGPDSLTIEPLNQKGKTFLALINQVFPAEE. The 715-residue stretch at 57 to 771 folds into the Myosin motor domain; that stretch reads KDVEDNCSLM…KFAEFDQIMK (715 aa). Residue 151–158 participates in ATP binding; it reads GESGAGKT. Residue serine 267 is modified to Phosphoserine. The interval 273–317 is responsible for slow ATPase activity; that stretch reads YLNRGCTRYFANKETDKQILQNRKSPEYLKAGSMKDPLLDDHGDF. A Phosphothreonine modification is found at threonine 405. Phosphoserine is present on serine 604. Residues 665–672 form an actin-binding region; it reads FIRCIKPN. The segment at 782 to 810 is required for binding calmodulin; it reads KRVNHWLTCSRWKKVQWCSLSVIKLKNKI. The region spanning 814–834 is the IQ domain; it reads AEACIKMQKTIRMWLCKRRHK. Positions 835–916 are three-helix bundle; that stretch reads PRIDGLVKVG…EELLSALQKK (82 aa). Positions 917–984 are SAH; sequence KQQEEEAERL…EDDEKRIQAE (68 aa). The segment at 934–955 is disordered; that stretch reads EKERKRREEDEKRRRKEEEERR. Serine 1025 carries the post-translational modification Phosphoserine. The tract at residues 1060–1285 is interaction with TAX1BP1 and CALCOCO2/NDP52; that stretch reads KEMSEFLSRG…ESRQARPTYA (226 aa). The interval 1116–1118 is interaction with OPTN; it reads RRL. Phosphoserine is present on serine 1155. The segment at 1157-1285 is interaction with TOM1; that stretch reads QQNPAAQIPA…ESRQARPTYA (129 aa).

The protein belongs to the TRAFAC class myosin-kinesin ATPase superfamily. Myosin family. Homodimer; dimerization seems to implicate the unfolding of the three-helix bundle region creating an additional calmodulin binding site, and cargo binding. Able to function as a monomer under specific conditions in vitro. Forms a complex with CFTR and DAB2 in the apical membrane of epithelial cells. Component of the DISP/DOCK7-induced septin displacement complex, at least composed of DOCK7, LRCH3 and MYO6. Binding to calmodulin through a unique insert, not found in other myosins, located in the neck region between the motor domain and the IQ domain appears to contribute to the directionality reversal. This interaction occurs only if the C-terminal lobe of calmodulin is occupied by calcium. Interaction with F-actin/ACTN1 occurs only at the apical brush border domain of the proximal tubule cells. Interacts with DAB2. In vitro, the C-terminal globular tail binds a C-terminal region of DAB2. Interacts with CFTR. Interacts with CABP5. Interacts with TOM1. Interacts with OPTN. Interacts with TAX1BP1 and CALCOCO2/NDP52. Interacts with TOM1L2. Interacts with CLIC5; may work together in a complex which also includes RDX and MYO6 to stabilize linkages between the plasma membrane and subjacent actin cytoskeleton at the base of stereocilia. Post-translationally, phosphorylation in the motor domain, induced by EGF, results in translocation of MYO6 from the cell surface to membrane ruffles and affects F-actin dynamics. Phosphorylated in vitro by p21-activated kinase (PAK). In terms of tissue distribution, expressed in most tissues examined including heart, brain, placenta, pancreas, spleen, thymus, prostate, testis, ovary, small intestine and colon. Highest levels in brain, pancreas, testis and small intestine. Also expressed in fetal brain and cochlea. Isoform 1 and isoform 2, containing the small insert, and isoform 4, containing neither insert, are expressed in unpolarized epithelial cells.

It is found in the golgi apparatus. It localises to the trans-Golgi network membrane. The protein resides in the nucleus. Its subcellular location is the cytoplasm. The protein localises to the perinuclear region. It is found in the membrane. It localises to the clathrin-coated pit. The protein resides in the cytoplasmic vesicle. Its subcellular location is the clathrin-coated vesicle. The protein localises to the cell projection. It is found in the filopodium. It localises to the ruffle membrane. The protein resides in the microvillus. Its subcellular location is the cytosol. The protein localises to the autophagosome. It is found in the endosome. It localises to the clathrin-coated vesicle membrane. Functionally, myosins are actin-based motor molecules with ATPase activity. Unconventional myosins serve in intracellular movements. Myosin 6 is a reverse-direction motor protein that moves towards the minus-end of actin filaments. Has slow rate of actin-activated ADP release due to weak ATP binding. Functions in a variety of intracellular processes such as vesicular membrane trafficking and cell migration. Required for the structural integrity of the Golgi apparatus via the p53-dependent pro-survival pathway. Appears to be involved in a very early step of clathrin-mediated endocytosis in polarized epithelial cells. Together with TOM1, mediates delivery of endocytic cargo to autophagosomes thereby promoting autophagosome maturation and driving fusion with lysosomes. Links TOM1 with autophagy receptors, such as TAX1BP1; CALCOCO2/NDP52 and OPTN. May act as a regulator of F-actin dynamics. As part of the DISP complex, may regulate the association of septins with actin and thereby regulate the actin cytoskeleton. May play a role in transporting DAB2 from the plasma membrane to specific cellular targets. May play a role in the extension and network organization of neurites. Required for structural integrity of inner ear hair cells. Required for the correct localization of CLIC5 and RDX at the stereocilium base. Modulates RNA polymerase II-dependent transcription. This chain is Unconventional myosin-VI, found in Homo sapiens (Human).